Here is a 281-residue protein sequence, read N- to C-terminus: 2-dehydro-3-deoxyphosphooctonate aldolase (281 aa).

Belongs to the KdsA family.

The protein resides in the cytoplasm. The enzyme catalyses D-arabinose 5-phosphate + phosphoenolpyruvate + H2O = 3-deoxy-alpha-D-manno-2-octulosonate-8-phosphate + phosphate. It participates in carbohydrate biosynthesis; 3-deoxy-D-manno-octulosonate biosynthesis; 3-deoxy-D-manno-octulosonate from D-ribulose 5-phosphate: step 2/3. It functions in the pathway bacterial outer membrane biogenesis; lipopolysaccharide biosynthesis. This chain is 2-dehydro-3-deoxyphosphooctonate aldolase, found in Pseudomonas entomophila (strain L48).